The primary structure comprises 438 residues: Sphingomyelinase phosphodiesterase D (438 aa).

The N-terminal stretch at methionine 1–alanine 17 is a signal peptide. Residues aspartate 27 and histidine 29 each contribute to the Zn(2+) site. An N-linked (GlcNAc...) asparagine glycan is attached at asparagine 40. Positions 111 and 148 each coordinate Zn(2+). An N-linked (GlcNAc...) asparagine glycan is attached at asparagine 160. Residue histidine 247 participates in Zn(2+) binding. An N-linked (GlcNAc...) asparagine glycan is attached at asparagine 271. 2 residues coordinate Zn(2+): histidine 287 and histidine 289. Asparagine 338 and asparagine 359 each carry an N-linked (GlcNAc...) asparagine glycan.

It belongs to the acid sphingomyelinase family. It depends on Zn(2+) as a cofactor.

The protein localises to the secreted. This Dictyostelium discoideum (Social amoeba) protein is Sphingomyelinase phosphodiesterase D (sgmD).